We begin with the raw amino-acid sequence, 209 residues long: Large ribosomal subunit protein uL3 (209 aa).

The residue at position 150 (glutamine 150) is an N5-methylglutamine.

Belongs to the universal ribosomal protein uL3 family. Part of the 50S ribosomal subunit. Forms a cluster with proteins L14 and L19. In terms of processing, methylated by PrmB.

In terms of biological role, one of the primary rRNA binding proteins, it binds directly near the 3'-end of the 23S rRNA, where it nucleates assembly of the 50S subunit. This Buchnera aphidicola subsp. Schizaphis graminum (strain Sg) protein is Large ribosomal subunit protein uL3.